A 92-amino-acid chain; its full sequence is Small nuclear ribonucleoprotein E (92 aa).

In terms of domain architecture, Sm spans Ile-18–Asn-92.

Belongs to the snRNP Sm proteins family. Core component of the spliceosomal U1, U2, U4 and U5 small nuclear ribonucleoproteins (snRNPs), the building blocks of the spliceosome. Most spliceosomal snRNPs contain a common set of Sm proteins, SNRPB, SNRPD1, SNRPD2, SNRPD3, SNRPE, SNRPF and SNRPG that assemble in a heptameric protein ring on the Sm site of the small nuclear RNA to form the core snRNP. Component of the U1 snRNP. The U1 snRNP is composed of the U1 snRNA and the 7 core Sm proteins SNRPB, SNRPD1, SNRPD2, SNRPD3, SNRPE, SNRPF and SNRPG, and at least three U1 snRNP-specific proteins SNRNP70/U1-70K, SNRPA/U1-A and SNRPC/U1-C. Component of the U4/U6-U5 tri-snRNP complex composed of the U4, U6 and U5 snRNAs and at least PRPF3, PRPF4, PRPF6, PRPF8, PRPF31, SNRNP200, TXNL4A, SNRNP40, SNRPB, SNRPD1, SNRPD2, SNRPD3, SNRPE, SNRPF, SNRPG, DDX23, CD2BP2, PPIH, SNU13, EFTUD2, SART1 and USP39, plus LSM2, LSM3, LSM4, LSM5, LSM6, LSM7 and LSM8. Component of the U7 snRNP complex, or U7 Sm protein core complex, that is composed of the U7 snRNA and at least LSM10, LSM11, SNRPB, SNRPD3, SNRPE, SNRPF and SNRPG; the complex does not contain SNRPD1 and SNRPD2. Component of the minor spliceosome, which splices U12-type introns. Part of the SMN-Sm complex that contains SMN1, GEMIN2/SIP1, DDX20/GEMIN3, GEMIN4, GEMIN5, GEMIN6, GEMIN7, GEMIN8, STRAP/UNRIP and the Sm proteins SNRPB, SNRPD1, SNRPD2, SNRPD3, SNRPE, SNRPF and SNRPG; catalyzes core snRNPs assembly. Forms a 6S pICln-Sm complex composed of CLNS1A/pICln, SNRPD1, SNRPD2, SNRPE, SNRPF and SNRPG; ring-like structure where CLNS1A/pICln mimics additional Sm proteins and which is unable to assemble into the core snRNP. Interacts with SMN1; the interaction is direct. Interacts with GEMIN2 (via N-terminus); the interaction is direct. Interacts with SNRPF; the interaction is direct. Interacts with SNRPG; the interaction is direct.

The protein resides in the cytoplasm. It is found in the cytosol. It localises to the nucleus. In terms of biological role, plays a role in pre-mRNA splicing as a core component of the spliceosomal U1, U2, U4 and U5 small nuclear ribonucleoproteins (snRNPs), the building blocks of the spliceosome. Component of both the pre-catalytic spliceosome B complex and activated spliceosome C complexes. As a component of the minor spliceosome, involved in the splicing of U12-type introns in pre-mRNAs. As part of the U7 snRNP it is involved in histone 3'-end processing. This chain is Small nuclear ribonucleoprotein E (SNRPE), found in Bos taurus (Bovine).